A 467-amino-acid polypeptide reads, in one-letter code: 3-isopropylmalate dehydratase large subunit (467 aa).

Residues Cys347, Cys407, and Cys410 each coordinate [4Fe-4S] cluster.

This sequence belongs to the aconitase/IPM isomerase family. LeuC type 1 subfamily. As to quaternary structure, heterodimer of LeuC and LeuD. [4Fe-4S] cluster serves as cofactor.

The enzyme catalyses (2R,3S)-3-isopropylmalate = (2S)-2-isopropylmalate. Its pathway is amino-acid biosynthesis; L-leucine biosynthesis; L-leucine from 3-methyl-2-oxobutanoate: step 2/4. Functionally, catalyzes the isomerization between 2-isopropylmalate and 3-isopropylmalate, via the formation of 2-isopropylmaleate. The sequence is that of 3-isopropylmalate dehydratase large subunit from Crocosphaera subtropica (strain ATCC 51142 / BH68) (Cyanothece sp. (strain ATCC 51142)).